Consider the following 309-residue polypeptide: Taste receptor type 2 member 8 (309 aa).

Over 1-7 (MFSPADN) the chain is Extracellular. A helical transmembrane segment spans residues 8–28 (IFIILITGEFIIGILGNGYIG). At 29-50 (LVNWIDWIKKKKISTIDCILTN) the chain is on the cytoplasmic side. A helical transmembrane segment spans residues 51-71 (LVISRICLISVMVVNGIVIVL). Over 72–82 (YPDVYTKTKLQ) the chain is Extracellular. Residues 83–103 (IVICTFWTFANYLNMWFTACL) form a helical membrane-spanning segment. Topologically, residues 104–131 (NVFYSLKVANSSHPLFLWLKRKIDMVVR) are cytoplasmic. A helical membrane pass occupies residues 132–152 (WILLGCFAISLLVSLIIATVL). The Extracellular portion of the chain corresponds to 153-184 (SHDYRFHAIAKHKRNVTEMFHVSKMPYFEPLT). A glycan (N-linked (GlcNAc...) asparagine) is linked at N167. A helical transmembrane segment spans residues 185–205 (LFNLLAIVPFIVSLMSFFLLV). Topologically, residues 206-239 (RSLWRHTKQIKLYATGGRDPSTEAHVRAIKTMTL) are cytoplasmic. The chain crosses the membrane as a helical span at residues 240–260 (LIFFFFLYYITSLLVXFSYLI). Residues 261–266 (TNYKLA) lie on the Extracellular side of the membrane. Residues 267–287 (MAFGEIVAILYPSGHSLILII) traverse the membrane as a helical segment. Residues 288 to 309 (LNNKLRQASVRMLTCRKIACVT) are Cytoplasmic-facing.

It belongs to the G-protein coupled receptor T2R family.

The protein localises to the membrane. Its function is as follows. Receptor that may play a role in the perception of bitterness and is gustducin-linked. May play a role in sensing the chemical composition of the gastrointestinal content. The activity of this receptor may stimulate alpha gustducin, mediate PLC-beta-2 activation and lead to the gating of TRPM5. The polypeptide is Taste receptor type 2 member 8 (TAS2R8) (Papio hamadryas (Hamadryas baboon)).